The following is a 606-amino-acid chain: Pyruvate decarboxylase 2 (606 aa).

Substrate is bound by residues Asp-68 and His-155. The segment at 433–515 (DSWFNCQKLK…FLINNGGYTI (83 aa)) is thiamine pyrophosphate binding. Positions 483, 510, and 512 each coordinate Mg(2+). Glu-516 contacts substrate.

This sequence belongs to the TPP enzyme family. As to quaternary structure, homotetramer. It depends on a metal cation as a cofactor. Thiamine diphosphate is required as a cofactor.

It catalyses the reaction a 2-oxocarboxylate + H(+) = an aldehyde + CO2. This is Pyruvate decarboxylase 2 (PDC2) from Oryza sativa subsp. indica (Rice).